A 479-amino-acid polypeptide reads, in one-letter code: MNIETLFPLDPNVKVRTRFAPSPTGYLHVGGARTALYSWLYAKHFNGEFVLRIEDTDLERSTPEATAAILEGMEWLNLAWEHGPYYQTKRFDRYNQVIDQMIEQGLAYRCYCSKERLENLRHEQEANKEKPRYDRHCLAHHDQPTDAPHVVRFKNPQEGSVVFDDAVRGRIEISNSELDDLIIRRTDGSPTYNFCVVVDDWDMGITHVVRGEDHINNTPRQINILKALGAPIPTYAHVSMINGDDGQKLSKRHGAVSVMQYRDDGYLPEALINYLVRLGWGHGDQEIFSREEMIELFDIHSVSKSASAFNTDKLQWLNQHYMRSLPAEHVAKYLAWHMNDQAIDTSNGPALEEIIPVLSERAKTLKELAAASRYFYQEFDGYDEKAAAKNFKAEAVAPLAKLLEKLTALTDWSVEAIHDAMNATAADLEIGMGKVGMPFRLAVTGSGQSPSMDITAKLVGRERTLARIQKAIEFIQAQA.

The short motif at 21-31 (PSPTGYLHVGG) is the 'HIGH' region element. The 'KMSKS' region signature appears at 248-252 (KLSKR). K251 contacts ATP.

This sequence belongs to the class-I aminoacyl-tRNA synthetase family. Glutamate--tRNA ligase type 1 subfamily. Monomer.

Its subcellular location is the cytoplasm. It catalyses the reaction tRNA(Glu) + L-glutamate + ATP = L-glutamyl-tRNA(Glu) + AMP + diphosphate. Its function is as follows. Catalyzes the attachment of glutamate to tRNA(Glu) in a two-step reaction: glutamate is first activated by ATP to form Glu-AMP and then transferred to the acceptor end of tRNA(Glu). In Actinobacillus pleuropneumoniae serotype 7 (strain AP76), this protein is Glutamate--tRNA ligase.